The following is a 1190-amino-acid chain: Ras-specific guanine nucleotide-releasing factor 2 (1190 aa).

One can recognise a PH 1 domain in the interval 22 to 133; sequence EGTKRGFLSK…WMEAIHQASY (112 aa). Residues 155–193 are a coiled coil; sequence ETEKIAANQLRHQLEDQDTEIERLKSEIVALNKTKERMR. In terms of domain architecture, IQ spans 205 to 234; the sequence is DIKKIKKVQSFMRGWLCRRKWKTIVQDYIC. Residues 243 to 429 enclose the DH domain; that stretch reads KRNQIVFTMV…EELSRVMHDE (187 aa). A PH 2 domain is found at 470-588; the sequence is PSVERGKLSK…WMSDISQCVD (119 aa). The N-terminal Ras-GEF domain occupies 635–755; the sequence is KVPQIRYASV…LTSSLNSRIG (121 aa). Positions 713–744 are disordered; that stretch reads VDGKSPRLCRKFSSPPPLAVSRTSSPVRARKL. S725 and S726 each carry phosphoserine. S736 carries the phosphoserine; by CDK5 modification. Positions 743–751 are regulates proteasomal degradation; that stretch reads KLSLTSSLN. 2 positions are modified to phosphoserine: S745 and S749. Positions 757-826 are disordered; the sequence is LDLTTSSSSS…QPGGQVADST (70 aa). A compositionally biased stretch (low complexity) spans 760 to 776; sequence TTSSSSSSPTTTVHSPA. Residues 798-810 show a composition bias toward polar residues; that stretch reads TDMSPCRSPSTTP. Phosphoserine is present on residues S801, S805, and S925. One can recognise a Ras-GEF domain in the interval 955 to 1187; that stretch reads SAMELAEQIT…YELSLKIEPR (233 aa). Residues 1052-1081 form a responsible of the affinity for farnesylated versus geranylgeranylated Ras region; it reads ALNRSAIYRLKKTWTKVSKQTKALMDKLQK.

As to quaternary structure, homooligomer and heterooligomer with RASGRF1. Interacts with Ras and RAC1. Interacts in a calcium-dependent manner with calmodulin. Interacts with CDK5R1 and probably EPB49. Interacts with the AMPA receptor through GRIA1. Interacts with microtubules. In terms of processing, phosphorylated by CDK5; down-regulates RASGRF2-mediated RAC1 activation. Post-translationally, ubiquitinated upon interaction with Ras. Ubiquitination leads to degradation through the 26S proteasome. In terms of tissue distribution, widely expressed. Detected in brain, lung, spleen, pancreas, kidney, liver, heart, mammary gland and skeletal muscle.

It is found in the cytoplasm. It localises to the cell membrane. The protein resides in the endoplasmic reticulum membrane. Functionally, functions as a calcium-regulated nucleotide exchange factor activating both Ras and RAC1 through the exchange of bound GDP for GTP. Preferentially activates HRAS in vivo compared to RRAS based on their different types of prenylation. Functions in synaptic plasticity by contributing to the induction of long term potentiation. The polypeptide is Ras-specific guanine nucleotide-releasing factor 2 (Rasgrf2) (Rattus norvegicus (Rat)).